The primary structure comprises 880 residues: Leucine--tRNA ligase (880 aa).

Positions 49-59 (PYPSGRIHMGH) match the 'HIGH' region motif. The 'KMSKS' region signature appears at 638 to 642 (KMSKS). ATP is bound at residue K641.

Belongs to the class-I aminoacyl-tRNA synthetase family.

Its subcellular location is the cytoplasm. The catalysed reaction is tRNA(Leu) + L-leucine + ATP = L-leucyl-tRNA(Leu) + AMP + diphosphate. The protein is Leucine--tRNA ligase of Bartonella henselae (strain ATCC 49882 / DSM 28221 / CCUG 30454 / Houston 1) (Rochalimaea henselae).